A 533-amino-acid chain; its full sequence is Capsid protein VP1 (533 aa).

The interval 333 to 353 (TIDLQQNPVPQTSSSTTDSPQ) is disordered.

The protein belongs to the microviridae F protein family.

The protein localises to the virion. It is found in the host cytoplasm. Assembles to form an icosahedral capsid with a T=1 symmetry. In Bdellovibrio bacteriovorus (Bacteriophage phiMH2K), this protein is Capsid protein VP1.